A 575-amino-acid polypeptide reads, in one-letter code: Phosphoenolpyruvate-protein phosphotransferase (575 aa).

At Tyr122 the chain carries Phosphotyrosine. His189 functions as the Tele-phosphohistidine intermediate in the catalytic mechanism. Residues Arg296 and Arg332 each contribute to the phosphoenolpyruvate site. Mg(2+)-binding residues include Glu431 and Asp455. Phosphoenolpyruvate contacts are provided by residues 454 to 455 (ND) and Arg465. Cys502 serves as the catalytic Proton donor.

It belongs to the PEP-utilizing enzyme family. In terms of assembly, homodimer. Interacts with the pole-localizer protein TmaR. Binding to TmaR is reversible as long as TmaR can get phosphorylated, whereas binding to non-phosphorylated TmaR is very strong and shifts the equilibrium toward binding. It depends on Mg(2+) as a cofactor. Phosphorylated on Tyr-122. Phosphorylation on Tyr-122 is important for polar localization but not for interaction with TmaR and for activity.

The protein localises to the cytoplasm. The catalysed reaction is L-histidyl-[protein] + phosphoenolpyruvate = N(pros)-phospho-L-histidyl-[protein] + pyruvate. With respect to regulation, inhibited by oxalate. In terms of biological role, general (non sugar-specific) component of the phosphoenolpyruvate-dependent sugar phosphotransferase system (sugar PTS). This major carbohydrate active-transport system catalyzes the phosphorylation of incoming sugar substrates concomitantly with their translocation across the cell membrane. Enzyme I transfers the phosphoryl group from phosphoenolpyruvate (PEP) to the phosphoryl carrier protein (HPr). Can also use (Z)-3-fluoro-PEP (ZFPEP), (Z)-3-methyl-PEP (ZMePEP), (Z)-3-chloro-PEP (ZClPEP) and (E)-3-chloro-PEP (EClPEP) as alternative phosphoryl donors. This chain is Phosphoenolpyruvate-protein phosphotransferase, found in Escherichia coli (strain K12).